A 305-amino-acid chain; its full sequence is Heat stress transcription factor B-4d (305 aa).

Residues 201-230 form a hydrophobic repeat HR-A/B region; it reads LRRRNSLLLSELAHMRKLYNDIIYFLQNHV. A Nuclear localization signal motif is present at residues 286-289; sequence KKRR. Positions 286-305 are disordered; sequence KKRRVQLVQEDEGDEQGSEG. A compositionally biased stretch (acidic residues) spans 294–305; the sequence is QEDEGDEQGSEG.

It belongs to the HSF family. Class B subfamily. In terms of assembly, homotrimer. Post-translationally, exhibits temperature-dependent phosphorylation.

The protein localises to the nucleus. Transcriptional regulator that specifically binds DNA of heat shock promoter elements (HSE). The chain is Heat stress transcription factor B-4d (HSFB4D) from Oryza sativa subsp. japonica (Rice).